Consider the following 854-residue polypeptide: Aryl hydrocarbon receptor (854 aa).

Residues 1–9 (MSSGANITY) constitute a propeptide that is removed on maturation. Positions 1–38 (MSSGANITYASRKRRKPVQKTVKPIPAEGIKSNPSKRH) are disordered. 2 consecutive short sequence motifs (nuclear localization signal) follow at residues 12–15 (RKRR) and 36–41 (KRHRDR). The bHLH domain maps to 26–79 (PAEGIKSNPSKRHRDRLNTELDRLASLLPFPQDVINKLDKLSVLRLSVSYLRAK). The interval 37–65 (RHRDRLNTELDRLASLLPFPQDVINKLDK) is DNA-binding. Required for maintaining the overall integrity of the AHR:ARNT heterodimer and its transcriptional activity regions lie at residues 49–81 (LASL…AKSF), 116–124 (LLQALNGFV), and 264–266 (FAI). A Nuclear export signal motif is present at residues 63-71 (LDKLSVLRL). The PAS 1 domain maps to 111–175 (QEGEFLLQAL…AEFQRQLHWA (65 aa)). The 71-residue stretch at 270–340 (LQPPSILEIR…CAESHIRMIK (71 aa)) folds into the PAS 2 domain. Residues 346–387 (MTVFRLLAKHSRWRWVQSNARLIYRNGRPDYIIATQRPLTDE) form the PAC domain. The tract at residues 425-451 (LPIRTKSNTSRKDWAPQSTPSKDSFHP) is disordered. Positions 440 to 451 (PQSTPSKDSFHP) are enriched in polar residues.

In terms of assembly, homodimer. Heterodimer; efficient DNA binding requires dimerization with another bHLH protein. Interacts with ARNT; the heterodimer ARNT:AHR binds to core DNA sequence 5'-TGCGTG-3' within the dioxin response element (DRE) of target gene promoters and activates their transcription. Binds MYBBP1A. Interacts with coactivators including SRC-1, RIP140 and NOCA7, and with the corepressor SMRT. Interacts with NEDD8 and IVNS1ABP. Interacts with BMAL1. Interacts with HSP90AB1. Interacts with TIPARP; leading to mono-ADP-ribosylation of AHR and subsequent inhibition of AHR. Post-translationally, mono-ADP-ribosylated, leading to inhibit transcription activator activity of AHR.

It localises to the cytoplasm. The protein localises to the nucleus. In terms of biological role, ligand-activated transcription factor that enables cells to adapt to changing conditions by sensing compounds from the environment, diet, microbiome and cellular metabolism, and which plays important roles in development, immunity and cancer. Upon ligand binding, translocates into the nucleus, where it heterodimerizes with ARNT and induces transcription by binding to xenobiotic response elements (XRE). Regulates a variety of biological processes, including angiogenesis, hematopoiesis, drug and lipid metabolism, cell motility and immune modulation. Xenobiotics can act as ligands: upon xenobiotic-binding, activates the expression of multiple phase I and II xenobiotic chemical metabolizing enzyme genes (such as the CYP1A1 gene). Mediates biochemical and toxic effects of halogenated aromatic hydrocarbons. Next to xenobiotics, natural ligands derived from plants, microbiota, and endogenous metabolism are potent AHR agonists. Tryptophan (Trp) derivatives constitute an important class of endogenous AHR ligands. Acts as a negative regulator of anti-tumor immunity: indoles and kynurenic acid generated by Trp catabolism act as ligand and activate AHR, thereby promoting AHR-driven cancer cell motility and suppressing adaptive immunity. Regulates the circadian clock by inhibiting the basal and circadian expression of the core circadian component PER1. Inhibits PER1 by repressing the CLOCK-BMAL1 heterodimer mediated transcriptional activation of PER1. The heterodimer ARNT:AHR binds to core DNA sequence 5'-TGCGTG-3' within the dioxin response element (DRE) of target gene promoters and activates their transcription. This chain is Aryl hydrocarbon receptor (Ahr), found in Mus spicilegus (Steppe mouse).